Here is a 265-residue protein sequence, read N- to C-terminus: Hydroxyacylglutathione hydrolase (265 aa).

Zn(2+)-binding residues include His-53, His-55, Asp-57, His-58, His-109, Asp-126, and His-164.

It belongs to the metallo-beta-lactamase superfamily. Glyoxalase II family. As to quaternary structure, monomer. The cofactor is Zn(2+).

The catalysed reaction is an S-(2-hydroxyacyl)glutathione + H2O = a 2-hydroxy carboxylate + glutathione + H(+). It functions in the pathway secondary metabolite metabolism; methylglyoxal degradation; (R)-lactate from methylglyoxal: step 2/2. Its function is as follows. Thiolesterase that catalyzes the hydrolysis of S-D-lactoyl-glutathione to form glutathione and D-lactic acid. This Dechloromonas aromatica (strain RCB) protein is Hydroxyacylglutathione hydrolase.